The following is a 233-amino-acid chain: 2-C-methyl-D-erythritol 4-phosphate cytidylyltransferase (233 aa).

Belongs to the IspD/TarI cytidylyltransferase family. IspD subfamily.

The enzyme catalyses 2-C-methyl-D-erythritol 4-phosphate + CTP + H(+) = 4-CDP-2-C-methyl-D-erythritol + diphosphate. It participates in isoprenoid biosynthesis; isopentenyl diphosphate biosynthesis via DXP pathway; isopentenyl diphosphate from 1-deoxy-D-xylulose 5-phosphate: step 2/6. In terms of biological role, catalyzes the formation of 4-diphosphocytidyl-2-C-methyl-D-erythritol from CTP and 2-C-methyl-D-erythritol 4-phosphate (MEP). In Carboxydothermus hydrogenoformans (strain ATCC BAA-161 / DSM 6008 / Z-2901), this protein is 2-C-methyl-D-erythritol 4-phosphate cytidylyltransferase.